We begin with the raw amino-acid sequence, 213 residues long: MEAIWLYQFRLIVIGDSTVGKSCLIRRFTEGRFAQVSDPTVGVDFFSRLVEIEPGKRIKLQIWDTAGQERFRSITRAYYRNSVGGLLLFDITNRRSFQNVHEWLEETKVHVQPYQIVFVLVGHKCDLDTQRQVTRHEAEKLAAAYGMKYIETSARDAINVEKAFTDLTRDIYELVKRGEITIQEGWEGVKSGFVPNVVHSSEEVIKSERRCLC.

GTP is bound by residues Ser-17, Gly-20, Lys-21, Ser-22, Cys-23, Ser-37, and Thr-40. Ser-22 contributes to the Mg(2+) binding site. The interval 35–43 (QVSDPTVGV) is switch-I. Mg(2+)-binding residues include Thr-40 and Asp-64. GTP contacts are provided by Gly-67, His-123, Lys-124, Asp-126, Ala-154, and Arg-155. The interval 67 to 83 (GQERFRSITRAYYRNSV) is switch-II. Ser-201 carries the phosphoserine modification. Residues Cys-211 and Cys-213 are each lipidated (S-geranylgeranyl cysteine). The residue at position 213 (Cys-213) is a Cysteine methyl ester.

This sequence belongs to the small GTPase superfamily. Rab family. Interacts (GDP-bound) with C9orf72; C9orf72 in complex with SMCR8 acts as a GEF for RAB39B. Interacts (in GTP-bound form) with PICK1 (via PDZ domain); a PICK1 homodimer may allow simultaneous association of RAB39B and GRIA2 to PICK1 which is involved in GRIA2 trafficking. Interacts with isoform c of RASSF1; the interaction is strong. Interacts with isoform a of RASSF1; the interaction is weak. Interacts with the DLG4/PSD-95. Interacts (GTP-bound) with HOPS complex components VPS39 and VPS41. It depends on Mg(2+) as a cofactor. Specifically expressed in neuron and neuronal precursors in the brain. Expression is high in all regions of the brain with highest levels observed in the hippocampus.

The protein resides in the cell membrane. It is found in the cytoplasmic vesicle membrane. Its subcellular location is the golgi apparatus. It localises to the cytoplasmic vesicle. The protein localises to the autophagosome membrane. The protein resides in the autolysosome membrane. The enzyme catalyses GTP + H2O = GDP + phosphate + H(+). With respect to regulation, regulated by guanine nucleotide exchange factors (GEFs) including C9orf72-SMCR8 complex, which promote the exchange of bound GDP for free GTP. Regulated by GTPase activating proteins (GAPs) which increase the GTP hydrolysis activity. Inhibited by GDP dissociation inhibitors (GDIs). In terms of biological role, the small GTPases Rab are key regulators of intracellular membrane trafficking, from the formation of transport vesicles to their fusion with membranes. Rabs cycle between an inactive GDP-bound form and an active GTP-bound form that is able to recruit to membranes different sets of downstream effectors directly responsible for vesicle formation, movement, tethering and fusion. RAB39B is involved in autophagy and may function in autophagosome formation. Binds downstream effector PICK1 to ensure selectively GRIA2 exit from the endoplasmic reticulum to the Golgi and to regulate AMPAR composition at the post-synapses and thus synaptic transmission. May regulate the homeostasis of SNCA/alpha-synuclein. The chain is Ras-related protein Rab-39B from Mus musculus (Mouse).